An 814-amino-acid chain; its full sequence is Cellulase/esterase CelE (814 aa).

An N-terminal signal peptide occupies residues 1 to 34; it reads MKKIVSLVCVLVMLVSILGSFSVVAASPVKGFQV. Positions 35–354 are cellulase; it reads SGTKLLDASG…AVFWWDNGYY (320 aa). The active-site Proton donor; for cellulase activity is E193. E316 acts as the Nucleophile; for cellulase activity in catalysis. A Dockerin domain is found at 409–479; it reads ANILYGDVNG…LLRSIDKFPA (71 aa). Positions 415, 417, 419, 420, 421, 426, 451, 452, 453, 455, 457, and 462 each coordinate Ca(2+). Residues 490–814 form an esterase region; sequence PGILYNGRFD…TAEIKNKLGW (325 aa). S612 serves as the catalytic Nucleophile; for esterase activity.

In the N-terminal section; belongs to the glycosyl hydrolase 5 (cellulase A) family. It in the C-terminal section; belongs to the carbohydrate esterase 2 (CE2) family.

The protein localises to the secreted. It catalyses the reaction Endohydrolysis of (1-&gt;4)-beta-D-glucosidic linkages in cellulose, lichenin and cereal beta-D-glucans.. The catalysed reaction is Deacetylation of xylans and xylo-oligosaccharides.. Its pathway is glycan metabolism; cellulose degradation. It participates in glycan degradation; xylan degradation. Esterase activity of the CE2 module is inhibited when this domain binds to cellohexaose or beta-glucan. In terms of biological role, multifunctional enzyme involved in the degradation of plant cell wall polysaccharides. Displays endoglucanase activity against carboxymethyl cellulose (CMC) and barley beta-glucan. Also catalyzes the deacetylation of acetylated birchwood xylan and glucomannan, with a preference for the latter, and of the synthetic substrate 4-nitrophenyl acetate (4-NPAc). The sequence is that of Cellulase/esterase CelE from Acetivibrio thermocellus (strain ATCC 27405 / DSM 1237 / JCM 9322 / NBRC 103400 / NCIMB 10682 / NRRL B-4536 / VPI 7372) (Clostridium thermocellum).